Here is a 412-residue protein sequence, read N- to C-terminus: Tyrosine--tRNA ligase (412 aa).

Tyr-31 provides a ligand contact to L-tyrosine. A 'HIGH' region motif is present at residues 36–45 (PTAPSLHIGH). L-tyrosine-binding residues include Tyr-162 and Gln-166. A 'KMSKS' region motif is present at residues 222–226 (KIGKT). Lys-225 provides a ligand contact to ATP. Residues 345-412 (KRWLDVVVQL…KKKKQVIDLN (68 aa)) form the S4 RNA-binding domain.

The protein belongs to the class-I aminoacyl-tRNA synthetase family. TyrS type 1 subfamily. As to quaternary structure, homodimer.

It localises to the cytoplasm. It carries out the reaction tRNA(Tyr) + L-tyrosine + ATP = L-tyrosyl-tRNA(Tyr) + AMP + diphosphate + H(+). Catalyzes the attachment of tyrosine to tRNA(Tyr) in a two-step reaction: tyrosine is first activated by ATP to form Tyr-AMP and then transferred to the acceptor end of tRNA(Tyr). The protein is Tyrosine--tRNA ligase of Chlamydia muridarum (strain MoPn / Nigg).